The following is a 316-amino-acid chain: Probable porphobilinogen deaminase (316 aa).

Cys-234 carries the post-translational modification S-(dipyrrolylmethanemethyl)cysteine.

This sequence belongs to the HMBS family. Requires dipyrromethane as cofactor.

The catalysed reaction is 4 porphobilinogen + H2O = hydroxymethylbilane + 4 NH4(+). The protein operates within porphyrin-containing compound metabolism; protoporphyrin-IX biosynthesis; coproporphyrinogen-III from 5-aminolevulinate: step 2/4. Functionally, tetrapolymerization of the monopyrrole PBG into the hydroxymethylbilane pre-uroporphyrinogen in several discrete steps. This chain is Probable porphobilinogen deaminase, found in Methanosarcina mazei (strain ATCC BAA-159 / DSM 3647 / Goe1 / Go1 / JCM 11833 / OCM 88) (Methanosarcina frisia).